The sequence spans 329 residues: Probable alpha-1,2-galactosyltransferase gmh1 (329 aa).

The Cytoplasmic portion of the chain corresponds to 1–14 (MLSFFTKNTLTKRK). A helical; Signal-anchor for type II membrane protein membrane pass occupies residues 15–35 (LIMLALAIVFTFFAFGLYFIP). Residues 36 to 329 (HDEISVFDFK…LWTKYKDKII (294 aa)) lie on the Lumenal side of the membrane. N-linked (GlcNAc...) asparagine glycans are attached at residues Asn127 and Asn169.

This sequence belongs to the glycosyltransferase 34 family.

The protein resides in the golgi apparatus membrane. The protein is Probable alpha-1,2-galactosyltransferase gmh1 (gmh1) of Schizosaccharomyces pombe (strain 972 / ATCC 24843) (Fission yeast).